The primary structure comprises 404 residues: Proteasomal ubiquitin receptor ADRM1-B (404 aa).

One can recognise a Pru domain in the interval 17–130; sequence SSSKYLVEFR…RKVNEYLNNP (114 aa). Disordered regions lie at residues 128-149, 195-258, and 376-404; these read NNPP…LSAL, GSGG…TSPT, and FAKA…MSLD. The segment covering 195–247 has biased composition (low complexity); the sequence is GSGGPTTSSSSSSSRSQSAAVTPSSTTSSTRTTSAPVAPAAAPATTPSPAVSS. The segment covering 248–258 has biased composition (polar residues); the sequence is NDGASAATSPT. The DEUBAD domain occupies 278-390; that stretch reads TGEGGQQVDL…QSTSSQKERE (113 aa). Over residues 386 to 395 the composition is skewed to basic and acidic residues; sequence QKERESSEKK.

This sequence belongs to the ADRM1 family. As to quaternary structure, component of the 19S proteasome regulatory particle complex. The 26S proteasome consists of a 20S core particle (CP) and two 19S regulatory subunits (RP).

The protein resides in the cytoplasm. It is found in the nucleus. Component of the 26S proteasome, a multiprotein complex involved in the ATP-dependent degradation of ubiquitinated proteins. This complex plays a key role in the maintenance of protein homeostasis by removing misfolded or damaged proteins, which could impair cellular functions, and by removing proteins whose functions are no longer required. Therefore, the proteasome participates in numerous cellular processes, including cell cycle progression, apoptosis, or DNA damage repair. Within the complex, functions as a proteasomal ubiquitin receptor. The polypeptide is Proteasomal ubiquitin receptor ADRM1-B (adrm1-b) (Xenopus laevis (African clawed frog)).